Here is an 850-residue protein sequence, read N- to C-terminus: Protein translocase subunit SecA (850 aa).

Residues glutamine 87, 105–109 (GEGKT), and aspartate 494 each bind ATP. Zn(2+) contacts are provided by cysteine 834, cysteine 836, cysteine 845, and cysteine 846.

Belongs to the SecA family. Monomer and homodimer. Part of the essential Sec protein translocation apparatus which comprises SecA, SecYEG and auxiliary proteins SecDF-YajC and YidC. Requires Zn(2+) as cofactor.

Its subcellular location is the cell inner membrane. It is found in the cytoplasm. It catalyses the reaction ATP + H2O + cellular proteinSide 1 = ADP + phosphate + cellular proteinSide 2.. Functionally, part of the Sec protein translocase complex. Interacts with the SecYEG preprotein conducting channel. Has a central role in coupling the hydrolysis of ATP to the transfer of proteins into and across the cell membrane, serving as an ATP-driven molecular motor driving the stepwise translocation of polypeptide chains across the membrane. In Desulfotalea psychrophila (strain LSv54 / DSM 12343), this protein is Protein translocase subunit SecA.